We begin with the raw amino-acid sequence, 61 residues long: Large ribosomal subunit protein uL29 (61 aa).

Belongs to the universal ribosomal protein uL29 family.

This is Large ribosomal subunit protein uL29 from Campylobacter jejuni subsp. jejuni serotype O:6 (strain 81116 / NCTC 11828).